Here is a 399-residue protein sequence, read N- to C-terminus: Unsaturated chondroitin disaccharide hydrolase (399 aa).

D116 acts as the Nucleophile in catalysis. Substrate is bound by residues D116, D176, G234, T236, R248, W252, S366, and S369. D176 serves as the catalytic Proton donor.

Belongs to the glycosyl hydrolase 88 family. In terms of assembly, monomer.

It catalyses the reaction beta-D-4-deoxy-Delta(4)-GlcpA-(1-&gt;3)-beta-D-GalpNAc6S + H2O = N-acetyl-beta-D-galactosamine 6-sulfate + 5-dehydro-4-deoxy-D-glucuronate. Functionally, catalyzes the hydrolysis of unsaturated hyaluronate and chondroitin disaccharides. Also degrades unsaturated heparin disaccharides. Releases 4-deoxy-4,5-didehydro D-glucuronic acid or 4-deoxy-4,5-didehydro L-iduronic acid from chondroitin disaccharides, hyaluronan disaccharides and heparin disaccharides and cleaves both glycosidic (1-&gt;3) and (1-&gt;4) bonds. Prefers sulfated glycosaminoglycans compared to unsulfated glycosaminoglycans. Probably required for mammalian cells invasion through the degradation of extracellular sulfated glycosaminoglycans such as chondroitin and hyaluronan. The protein is Unsaturated chondroitin disaccharide hydrolase (ugl) of Streptococcus pyogenes serotype M1.